A 327-amino-acid chain; its full sequence is Methionyl-tRNA formyltransferase (327 aa).

A (6S)-5,6,7,8-tetrahydrofolate-binding site is contributed by 121 to 124 (SLLP).

Belongs to the Fmt family.

It carries out the reaction L-methionyl-tRNA(fMet) + (6R)-10-formyltetrahydrofolate = N-formyl-L-methionyl-tRNA(fMet) + (6S)-5,6,7,8-tetrahydrofolate + H(+). Its function is as follows. Attaches a formyl group to the free amino group of methionyl-tRNA(fMet). The formyl group appears to play a dual role in the initiator identity of N-formylmethionyl-tRNA by promoting its recognition by IF2 and preventing the misappropriation of this tRNA by the elongation apparatus. The polypeptide is Methionyl-tRNA formyltransferase (Burkholderia pseudomallei (strain 668)).